We begin with the raw amino-acid sequence, 525 residues long: Glutamate--cysteine ligase (525 aa).

It belongs to the glutamate--cysteine ligase type 1 family. Type 1 subfamily.

It carries out the reaction L-cysteine + L-glutamate + ATP = gamma-L-glutamyl-L-cysteine + ADP + phosphate + H(+). Its pathway is sulfur metabolism; glutathione biosynthesis; glutathione from L-cysteine and L-glutamate: step 1/2. The polypeptide is Glutamate--cysteine ligase (Pseudomonas putida (strain ATCC 47054 / DSM 6125 / CFBP 8728 / NCIMB 11950 / KT2440)).